The primary structure comprises 746 residues: Histone-lysine N-methyltransferase EZH2 (746 aa).

The interval 1 to 340 (MGQTGKKSEK…AKEFAAALTA (340 aa)) is interaction with DNMT1, DNMT3A and DNMT3B. Phosphoserine; by PKB/AKT1 is present on serine 21. The interaction with EED stretch occupies residues 39–68 (KSMFSSNRQKILERTEILNQEWKQRRIQPV). The O-linked (GlcNAc) serine glycan is linked to serine 75. Position 76 is a phosphoserine (serine 76). Positions 180 to 222 (QYNDDDDDDDGDDPEEREEKQKDLEDHRDDKESRPPRKFPSDK) are disordered. Positions 182 to 195 (NDDDDDDDGDDPEE) are enriched in acidic residues. Positions 196 to 222 (REEKQKDLEDHRDDKESRPPRKFPSDK) are enriched in basic and acidic residues. The tract at residues 329–522 (EGAKEFAAAL…SSNHVYNYQP (194 aa)) is interaction with CDYL. The residue at position 339 (threonine 339) is a Phosphothreonine. A disordered region spans residues 340–426 (AERIKTPPKR…PIKMKPNIEP (87 aa)). At threonine 345 the chain carries Phosphothreonine; by CDK1 and CDK2. A compositionally biased stretch (basic residues) spans 345–357 (TPPKRPGGRRRGR). 2 positions are modified to phosphoserine: serine 363 and serine 366. Threonine 367 is modified (phosphothreonine). Basic and acidic residues predominate over residues 374–385 (ESKDTDSDREAG). Threonine 487 carries the phosphothreonine modification. The CXC domain occupies 503 to 605 (CRKIQLKKDG…SKNVSCKNCS (103 aa)). The region spanning 612-727 (KHLLLAPSDV…TGEELFFDYR (116 aa)) is the SET domain. A Glycyl lysine isopeptide (Lys-Gly) (interchain with G-Cter in SUMO2) cross-link involves residue lysine 634.

Belongs to the class V-like SAM-binding methyltransferase superfamily. Histone-lysine methyltransferase family. EZ subfamily. Component of the PRC2/EED-EZH2 complex, which includes EED, EZH2, SUZ12, RBBP4 and RBBP7 and possibly AEBP2. The minimum components required for methyltransferase activity of the PRC2/EED-EZH2 complex are EED, EZH2 and SUZ12. The PRC2 complex may also interact with DNMT1, DNMT3A, DNMT3B and PHF1 via the EZH2 subunit and with SIRT1 via the SUZ12 subunit. Interacts with HDAC1 and HDAC2. Binds ATRX via the SET domain. Interacts with PRAME. Interacts with CDYL. Interacts with BMAL1, CLOCK and CRY1. Interacts with DNMT3L; the interaction is direct. Interacts with EZHIP; the interaction blocks EZH2 methyltransferase activity. Interacts with ZNF263; recruited to the SIX3 promoter along with other proteins involved in chromatin modification and transcriptional corepression where it contributes to transcriptional repression. Interacts with ARMC12. Interacts with ZMYND8; the interaction is dependent on the presence of chromatin. Interacts with DDX18; this interaction inhibits the PRC2 complex. In terms of processing, phosphorylated by AKT1. Phosphorylation by AKT1 reduces methyltransferase activity. Phosphorylation at Thr-345 by CDK1 and CDK2 promotes maintenance of H3K27me3 levels at EZH2-target loci, thus leading to epigenetic gene silencing. Sumoylated. Post-translationally, glycosylated: O-GlcNAcylation at Ser-75 by OGT increases stability of EZH2 and facilitates the formation of H3K27me3 by the PRC2/EED-EZH2 complex.

It is found in the nucleus. It catalyses the reaction L-lysyl(27)-[histone H3] + 3 S-adenosyl-L-methionine = N(6),N(6),N(6)-trimethyl-L-lysyl(27)-[histone H3] + 3 S-adenosyl-L-homocysteine + 3 H(+). In terms of biological role, polycomb group (PcG) protein. Catalytic subunit of the PRC2/EED-EZH2 complex, which methylates 'Lys-9' (H3K9me) and 'Lys-27' (H3K27me) of histone H3, leading to transcriptional repression of the affected target gene. Able to mono-, di- and trimethylate 'Lys-27' of histone H3 to form H3K27me1, H3K27me2 and H3K27me3, respectively. Displays a preference for substrates with less methylation, loses activity when progressively more methyl groups are incorporated into H3K27, H3K27me0 &gt; H3K27me1 &gt; H3K27me2. Compared to EZH1-containing complexes, it is more abundant in embryonic stem cells and plays a major role in forming H3K27me3, which is required for embryonic stem cell identity and proper differentiation. The PRC2/EED-EZH2 complex may also serve as a recruiting platform for DNA methyltransferases, thereby linking two epigenetic repression systems. EZH2 can also methylate non-histone proteins such as the transcription factor GATA4 and the nuclear receptor RORA. Regulates the circadian clock via histone methylation at the promoter of the circadian genes. Essential for the CRY1/2-mediated repression of the CLOCK-BMAL1 transcriptional activation of PER1/2. Involved in the di and trimethylation of 'Lys-27' of histone H3 on PER1/2 promoters which is necessary for the CRY1/2 proteins to inhibit transcription. This chain is Histone-lysine N-methyltransferase EZH2 (EZH2), found in Macaca fascicularis (Crab-eating macaque).